An 83-amino-acid polypeptide reads, in one-letter code: Protein L83L (83 aa).

The interval 1–26 (MDTSLKKNNGALEADNKNYQNYKDEP) is disordered.

The protein belongs to the asfivirus L83L family. As to quaternary structure, interacts with host IL1B.

It is found in the host cytoplasm. Its function is as follows. May subvert the host innate immune response by interacting with host IL1B and interfering with its function. This is Protein L83L from Ornithodoros (relapsing fever ticks).